The sequence spans 295 residues: Protease HtpX (295 aa).

2 helical membrane passes run 5-25 (VILFLATNLAVLLVLSISMRL) and 43-63 (ALLIFAAIIGFSGSLISLAIS). His-148 contacts Zn(2+). Residue Glu-149 is part of the active site. Zn(2+) is bound at residue His-152. 2 helical membrane passes run 159–179 (VTLALIQGVVNTFVIFLARII) and 198–218 (FFITTLIAQTVLAILASLIVL). Glu-225 provides a ligand contact to Zn(2+).

Belongs to the peptidase M48B family. It depends on Zn(2+) as a cofactor.

It is found in the cell inner membrane. The protein is Protease HtpX of Nitrosococcus oceani (strain ATCC 19707 / BCRC 17464 / JCM 30415 / NCIMB 11848 / C-107).